The chain runs to 286 residues: MAPAVQQQQSGGGGGSTGAAAVGSTTRWCPTPEQLMMLEEMYRGGLRTPNAAQIQQITAHLSTYGRIEGKNVFYWFQNHKARDRQKLRRRLCISHHLLSCAHYYHHHLAAAAAVVPPPQLLPPLHPSSSSSSCGGGLIDHANSLLSPTSATTPTSAAAAAAAAAYTTSYYYPFTAAAAPPPPRTSPAASPLFHYNQGGGGVVLPAAEAIGRSSSSSDYSLGKLVDNFGVALEETFPAQPQQPATTMAMTAVVDTTAVAAAAGGFCRPLKTLDLFPGGLKEEQHDVV.

Residues 1–25 (MAPAVQQQQSGGGGGSTGAAAVGST) form a disordered region. Positions 23-87 (GSTTRWCPTP…NHKARDRQKL (65 aa)) form a DNA-binding region, homeobox; WUS-type.

It belongs to the WUS homeobox family.

The protein resides in the nucleus. Functionally, transcription factor which may be involved in developmental processes. The sequence is that of Putative WUSCHEL-related homeobox 2 (WOX2) from Oryza sativa subsp. japonica (Rice).